A 409-amino-acid polypeptide reads, in one-letter code: Peptidase T (409 aa).

Position 80 (His80) interacts with Zn(2+). Asp82 is a catalytic residue. Zn(2+) is bound at residue Asp143. Residue Glu177 is the Proton acceptor of the active site. 3 residues coordinate Zn(2+): Glu178, Asp200, and His382.

It belongs to the peptidase M20B family. Requires Zn(2+) as cofactor.

The protein resides in the cytoplasm. It catalyses the reaction Release of the N-terminal residue from a tripeptide.. Cleaves the N-terminal amino acid of tripeptides. This is Peptidase T from Alkaliphilus oremlandii (strain OhILAs) (Clostridium oremlandii (strain OhILAs)).